A 291-amino-acid polypeptide reads, in one-letter code: Diaminopimelate epimerase (291 aa).

Substrate is bound by residues Asn-17, Gln-50, and Asn-70. The active-site Proton donor is the Cys-79. Substrate is bound by residues 80–81, Asn-167, Asn-200, and 218–219; these read GN and ER. Cys-227 functions as the Proton acceptor in the catalytic mechanism. Residue 228-229 coordinates substrate; that stretch reads GS.

Belongs to the diaminopimelate epimerase family. In terms of assembly, homodimer.

Its subcellular location is the cytoplasm. The enzyme catalyses (2S,6S)-2,6-diaminopimelate = meso-2,6-diaminopimelate. It functions in the pathway amino-acid biosynthesis; L-lysine biosynthesis via DAP pathway; DL-2,6-diaminopimelate from LL-2,6-diaminopimelate: step 1/1. Catalyzes the stereoinversion of LL-2,6-diaminopimelate (L,L-DAP) to meso-diaminopimelate (meso-DAP), a precursor of L-lysine and an essential component of the bacterial peptidoglycan. The chain is Diaminopimelate epimerase from Bradyrhizobium diazoefficiens (strain JCM 10833 / BCRC 13528 / IAM 13628 / NBRC 14792 / USDA 110).